We begin with the raw amino-acid sequence, 273 residues long: Peptidoglycan-N-acetylglucosamine deacetylase BC_1974 (273 aa).

The chain crosses the membrane as a helical span at residues 10–30 (IVVVLIAIAAVAIGYYMFQSI). In terms of domain architecture, NodB homology spans 69 to 255 (KVAYLTFDDG…GLKEKGYEFE (187 aa)). D76 (proton acceptor) is an active-site residue. Residues D77, H126, and H130 each coordinate Zn(2+). The Proton donor role is filled by H230.

Belongs to the polysaccharide deacetylase family. Zn(2+) is required as a cofactor. Co(2+) serves as cofactor. The cofactor is Ni(2+).

Its subcellular location is the cell membrane. The catalysed reaction is peptidoglycan-N-acetyl-D-glucosamine + H2O = peptidoglycan-D-glucosamine + acetate.. Its activity is regulated as follows. Inhibited by the hydroxamate N-hydroxy-4-(naphthalene-1-yl)benzamide (NHNB). Catalyzes the deacetylation of N-acetylglucosamine (GlcNAc) residues in peptidoglycan. The sequence is that of Peptidoglycan-N-acetylglucosamine deacetylase BC_1974 from Bacillus cereus (strain ATCC 14579 / DSM 31 / CCUG 7414 / JCM 2152 / NBRC 15305 / NCIMB 9373 / NCTC 2599 / NRRL B-3711).